Consider the following 373-residue polypeptide: GTP cyclohydrolase 1 type 2 homolog (373 aa).

A divalent metal cation contacts are provided by His-68, His-69, Asp-107, His-333, and Glu-336.

This sequence belongs to the GTP cyclohydrolase I type 2/NIF3 family. As to quaternary structure, homohexamer.

The sequence is that of GTP cyclohydrolase 1 type 2 homolog (yqfO) from Bacillus subtilis (strain 168).